The chain runs to 176 residues: Ferritin, spleen middle subunit (176 aa).

The Ferritin-like diiron domain occupies 7 to 156 (QNYHRDCEAA…DFITNLSRMD (150 aa)). Positions 24, 59, 62, 104, and 138 each coordinate Fe cation.

The protein belongs to the ferritin family. In spleen, forms a homomer. The functional molecule forms a roughly spherical shell with a diameter of 12 nm and contains a central cavity into which the insoluble mineral iron core is deposited. In terms of tissue distribution, spleen (at protein level).

It catalyses the reaction 4 Fe(2+) + O2 + 4 H(+) = 4 Fe(3+) + 2 H2O. Functionally, stores iron in a soluble, non-toxic, readily available form. Important for iron homeostasis. Has ferroxidase activity. Iron is taken up in the ferrous form and deposited as ferric hydroxides after oxidation. This chain is Ferritin, spleen middle subunit, found in Trematomus bernacchii (Emerald rockcod).